The sequence spans 277 residues: NAD kinase (277 aa).

D67 functions as the Proton acceptor in the catalytic mechanism. Residues 67–68 (DG), R72, 137–138 (NE), K148, R165, D167, 178–183 (TGYAMS), L202, and Q236 contribute to the NAD(+) site.

The protein belongs to the NAD kinase family. A divalent metal cation is required as a cofactor.

The protein resides in the cytoplasm. It catalyses the reaction NAD(+) + ATP = ADP + NADP(+) + H(+). Functionally, involved in the regulation of the intracellular balance of NAD and NADP, and is a key enzyme in the biosynthesis of NADP. Catalyzes specifically the phosphorylation on 2'-hydroxyl of the adenosine moiety of NAD to yield NADP. In Pyrococcus furiosus (strain ATCC 43587 / DSM 3638 / JCM 8422 / Vc1), this protein is NAD kinase.